A 312-amino-acid chain; its full sequence is DNA-directed RNA polymerase subunit alpha (312 aa).

The segment at 1 to 226 (MIEFEKPKIT…DHLNLFVDLS (226 aa)) is alpha N-terminal domain (alpha-NTD). An alpha C-terminal domain (alpha-CTD) region spans residues 243-312 (TERVLDKIIE…ELGLSLKKRK (70 aa)).

Belongs to the RNA polymerase alpha chain family. In terms of assembly, homodimer. The RNAP catalytic core consists of 2 alpha, 1 beta, 1 beta' and 1 omega subunit. When a sigma factor is associated with the core the holoenzyme is formed, which can initiate transcription.

It carries out the reaction RNA(n) + a ribonucleoside 5'-triphosphate = RNA(n+1) + diphosphate. In terms of biological role, DNA-dependent RNA polymerase catalyzes the transcription of DNA into RNA using the four ribonucleoside triphosphates as substrates. This is DNA-directed RNA polymerase subunit alpha from Lactococcus lactis subsp. lactis (strain IL1403) (Streptococcus lactis).